The primary structure comprises 423 residues: Gamma-glutamyl phosphate reductase (423 aa).

The protein belongs to the gamma-glutamyl phosphate reductase family.

The protein resides in the cytoplasm. The catalysed reaction is L-glutamate 5-semialdehyde + phosphate + NADP(+) = L-glutamyl 5-phosphate + NADPH + H(+). It functions in the pathway amino-acid biosynthesis; L-proline biosynthesis; L-glutamate 5-semialdehyde from L-glutamate: step 2/2. Its function is as follows. Catalyzes the NADPH-dependent reduction of L-glutamate 5-phosphate into L-glutamate 5-semialdehyde and phosphate. The product spontaneously undergoes cyclization to form 1-pyrroline-5-carboxylate. This chain is Gamma-glutamyl phosphate reductase, found in Burkholderia lata (strain ATCC 17760 / DSM 23089 / LMG 22485 / NCIMB 9086 / R18194 / 383).